The primary structure comprises 523 residues: Mediator of RNA polymerase II transcription subunit 1.2 (523 aa).

This sequence belongs to the Mediator complex subunit 1 family. Component of the Mediator complex.

The protein localises to the nucleus. Component of the Mediator complex, a coactivator involved in the regulated transcription of nearly all RNA polymerase II-dependent genes. Mediator functions as a bridge to convey information from gene-specific regulatory proteins to the basal RNA polymerase II transcription machinery. Mediator is recruited to promoters by direct interactions with regulatory proteins and serves as a scaffold for the assembly of a functional preinitiation complex with RNA polymerase II and the general transcription factors. The protein is Mediator of RNA polymerase II transcription subunit 1.2 (mdt-1.2) of Caenorhabditis briggsae.